The chain runs to 425 residues: Inner membrane protein YqcE (425 aa).

Over 1-8 the chain is Cytoplasmic; sequence MQHNSYRR. The chain crosses the membrane as a helical span at residues 9 to 29; sequence WITLAIISFSGGVSFDLAYLR. The Periplasmic portion of the chain corresponds to 30–48; the sequence is YIYQIPMAKFMGFSNTEIG. Residues 49–69 form a helical membrane-spanning segment; it reads LIMSTFGIAAIILYAPSGVIA. At 70–75 the chain is on the cytoplasmic side; the sequence is DKFSHR. The next 2 membrane-spanning stretches (helical) occupy residues 76–96 and 97–117; these read KMIT…ATYP and PLWV…LMLW. Residues 118-138 lie on the Cytoplasmic side of the membrane; the sequence is SVSIKAASLLGDHSEQGKIMG. A helical transmembrane segment spans residues 139–159; the sequence is WMEGLRGVGVMSLAVFTMWVF. Residues 160 to 171 lie on the Periplasmic side of the membrane; it reads SRFAPDDSTSLK. The chain crosses the membrane as a helical span at residues 172-192; the sequence is TVIIIYSVVYILLGILCWFFV. The Cytoplasmic portion of the chain corresponds to 193-219; that stretch reads SDNNNLRSANNEEKQSFQLSDILAVLR. Residues 220 to 240 traverse the membrane as a helical segment; that stretch reads ISTTWYCSMVIFGVFTIYAIL. Over 241–259 the chain is Periplasmic; the sequence is SYSTNYLTEMYGMSLVAAS. A helical membrane pass occupies residues 260-280; that stretch reads YMGIVINKIFRALCGPLGGII. Residues 281–291 lie on the Cytoplasmic side of the membrane; that stretch reads TTYSKVKSPTR. The chain crosses the membrane as a helical span at residues 292-312; the sequence is VIQILSVLGLLTLTALLVTNS. Residue asparagine 313 is a topological domain, periplasmic. The chain crosses the membrane as a helical span at residues 314–334; the sequence is PQSVAMGIGLILLLGFTCYAS. Topologically, residues 335 to 354 are cytoplasmic; sequence RGLYWACPGEARTPSYIMGT. Residues 355-375 form a helical membrane-spanning segment; that stretch reads TVGICSVIGFLPDVFVYPIIG. Residues 376–388 lie on the Periplasmic side of the membrane; sequence HWQDTLPAAEAYR. A helical transmembrane segment spans residues 389–409; the sequence is NMWLMGMAALGMVIVFTFLLF. At 410–425 the chain is on the cytoplasmic side; the sequence is QKIRTADSAPAMASSK.

The protein to E.coli YihN.

The protein localises to the cell inner membrane. The polypeptide is Inner membrane protein YqcE (yqcE) (Escherichia coli (strain K12)).